Here is a 148-residue protein sequence, read N- to C-terminus: uncharacterized protein (148 aa).

The HTH asnC-type domain occupies 3-64 (LDALDRKILE…KLNYESIGYD (62 aa)). A DNA-binding region (H-T-H motif) is located at residues 22–41 (YREIAKDLNVAVGTIYNRIK).

This is an uncharacterized protein from Pyrococcus horikoshii (strain ATCC 700860 / DSM 12428 / JCM 9974 / NBRC 100139 / OT-3).